The chain runs to 684 residues: UvrABC system protein B (684 aa).

Residues 30–188 (EGVQRGDRWQ…QELVSLHYVR (159 aa)) enclose the Helicase ATP-binding domain. 43–50 (GVTGSGKT) serves as a coordination point for ATP. Residues 96-119 (YYDFYQPEAYLPALDKYIAKDLRI) carry the Beta-hairpin motif. In terms of domain architecture, Helicase C-terminal spans 435 to 601 (QIDDLLGEIR…SIIKSVEQVL (167 aa)). A UVR domain is found at 641-676 (YSMAESLRLEMQEAALKMEYEKAAYLRDEITKFEHR).

The protein belongs to the UvrB family. As to quaternary structure, forms a heterotetramer with UvrA during the search for lesions. Interacts with UvrC in an incision complex.

Its subcellular location is the cytoplasm. Its function is as follows. The UvrABC repair system catalyzes the recognition and processing of DNA lesions. A damage recognition complex composed of 2 UvrA and 2 UvrB subunits scans DNA for abnormalities. Upon binding of the UvrA(2)B(2) complex to a putative damaged site, the DNA wraps around one UvrB monomer. DNA wrap is dependent on ATP binding by UvrB and probably causes local melting of the DNA helix, facilitating insertion of UvrB beta-hairpin between the DNA strands. Then UvrB probes one DNA strand for the presence of a lesion. If a lesion is found the UvrA subunits dissociate and the UvrB-DNA preincision complex is formed. This complex is subsequently bound by UvrC and the second UvrB is released. If no lesion is found, the DNA wraps around the other UvrB subunit that will check the other stand for damage. This Chlorobium limicola (strain DSM 245 / NBRC 103803 / 6330) protein is UvrABC system protein B.